Consider the following 131-residue polypeptide: D-ribose pyranase (131 aa).

Residue histidine 20 is the Proton donor of the active site. Substrate-binding positions include aspartate 28, histidine 98, and 120–122 (YAN).

The protein belongs to the RbsD / FucU family. RbsD subfamily. As to quaternary structure, homodecamer.

Its subcellular location is the cytoplasm. The enzyme catalyses beta-D-ribopyranose = beta-D-ribofuranose. Its pathway is carbohydrate metabolism; D-ribose degradation; D-ribose 5-phosphate from beta-D-ribopyranose: step 1/2. Catalyzes the interconversion of beta-pyran and beta-furan forms of D-ribose. The protein is D-ribose pyranase of Bacillus velezensis (strain DSM 23117 / BGSC 10A6 / LMG 26770 / FZB42) (Bacillus amyloliquefaciens subsp. plantarum).